The sequence spans 383 residues: Trichodiene synthase (383 aa).

It belongs to the trichodiene synthase family.

The enzyme catalyses (2E,6E)-farnesyl diphosphate = trichodiene + diphosphate. Its pathway is sesquiterpene biosynthesis; trichothecene biosynthesis. TS is a member of the terpene cyclase group of enzymes. It catalyzes the isomerization and cyclization of farnesyl pyro-phosphate to form trichodiene, the first cyclic intermediate in the biosynthetic pathway for trichothecenes. It serves to branch trichothecene biosynthesis from the isoprenoid pathway. The sequence is that of Trichodiene synthase (TRI5) from Stachybotrys chartarum (Toxic black mold).